The primary structure comprises 352 residues: F-box/kelch-repeat protein SKIP30 (352 aa).

The F-box domain maps to 9 to 55; that stretch reads SGLLDGIPEAVALRCLAHVPLHLHPNLELVSRSWRAAIRSHELFRVR. Kelch repeat units lie at residues 57–109, 110–167, 168–215, 243–293, and 296–351; these read ELRS…TTAG, MLFV…VLQG, KIVV…LVVN, YGWP…MTSL, and EVLI…TQLT.

As to quaternary structure, part of a SCF (ASK-cullin-F-box) protein ligase complex. Interacts with SKP1A/ASK1.

It functions in the pathway protein modification; protein ubiquitination. Component of SCF(ASK-cullin-F-box) E3 ubiquitin ligase complexes, which may mediate the ubiquitination and subsequent proteasomal degradation of target proteins. The protein is F-box/kelch-repeat protein SKIP30 (SKIP30) of Arabidopsis thaliana (Mouse-ear cress).